The sequence spans 122 residues: uncharacterized protein (122 aa).

A helical transmembrane segment spans residues 9–25 (AFPSPVFLGGVFFVFFF).

The protein resides in the cytoplasm. It is found in the nucleus. It localises to the membrane. This is an uncharacterized protein from Saccharomyces cerevisiae (strain ATCC 204508 / S288c) (Baker's yeast).